Reading from the N-terminus, the 358-residue chain is Heterogeneous nuclear ribonucleoprotein A2 homolog 2 (358 aa).

RRM domains lie at R9–K92 and K100–Q179. Disordered stretches follow at residues Q182–G217 and Y333–Y358. Over residues G193–G217 the composition is skewed to gly residues. The nuclear targeting sequence stretch occupies residues Q309–Y352.

It is found in the nucleus. Functionally, forms complexes (ribonucleosomes) with at least 20 other different hnRNP and heterogeneous nuclear RNA in the nucleus. The sequence is that of Heterogeneous nuclear ribonucleoprotein A2 homolog 2 from Xenopus laevis (African clawed frog).